Reading from the N-terminus, the 383-residue chain is Succinyl-diaminopimelate desuccinylase (383 aa).

Zn(2+) is bound at residue H74. D76 is a catalytic residue. D107 provides a ligand contact to Zn(2+). The active-site Proton acceptor is the E141. Positions 142, 170, and 356 each coordinate Zn(2+).

Belongs to the peptidase M20A family. DapE subfamily. Homodimer. The cofactor is Zn(2+). It depends on Co(2+) as a cofactor.

It carries out the reaction N-succinyl-(2S,6S)-2,6-diaminopimelate + H2O = (2S,6S)-2,6-diaminopimelate + succinate. Its pathway is amino-acid biosynthesis; L-lysine biosynthesis via DAP pathway; LL-2,6-diaminopimelate from (S)-tetrahydrodipicolinate (succinylase route): step 3/3. Catalyzes the hydrolysis of N-succinyl-L,L-diaminopimelic acid (SDAP), forming succinate and LL-2,6-diaminopimelate (DAP), an intermediate involved in the bacterial biosynthesis of lysine and meso-diaminopimelic acid, an essential component of bacterial cell walls. The polypeptide is Succinyl-diaminopimelate desuccinylase (Cupriavidus necator (strain ATCC 17699 / DSM 428 / KCTC 22496 / NCIMB 10442 / H16 / Stanier 337) (Ralstonia eutropha)).